A 433-amino-acid polypeptide reads, in one-letter code: MTAITRITLTGALLAAALLLAALQPARAETLDRIVAVVDDQVVLASELERELATIANQLRSRGQRLPPRDVFQRQVLERLITQRVQLSRAQRVGITVDDATLDAAMQRMARQNNMTLGQFRQAVEQEGFEYNYFREGIREEIAISRLRQAQVEEQVTVTPQEVEEVLETLDDENQEYRLGHILVATPEAASTAQLEEARERIEQLREQIIAGETDFEGAATAFSDAASAMEGGDLGWRLHSQLPSLFAEAIDEGLQAGEVSGVLQNSSGFHLVKLMDQRTQGGERVTETRARHILIRTDGDVITDEDARLRLRSLLERIEAGESFAELAEAYSEDPGSAARGGDLGWTQPGQLVPEFQGAMDALEEGQISAPFASPFGWHIVQVTDRRERDVSRERLRDQLAQQIHQRKVEEAFEQWIRRLRDEAYVDVRVEL.

Positions 1 to 28 (MTAITRITLTGALLAAALLLAALQPARA) are cleaved as a signal peptide. PpiC domains follow at residues 174–277 (NQEY…KLMD) and 286–386 (VTET…QVTD).

Its subcellular location is the periplasm. It carries out the reaction [protein]-peptidylproline (omega=180) = [protein]-peptidylproline (omega=0). Functionally, chaperone involved in the correct folding and assembly of outer membrane proteins. Recognizes specific patterns of aromatic residues and the orientation of their side chains, which are found more frequently in integral outer membrane proteins. May act in both early periplasmic and late outer membrane-associated steps of protein maturation. The protein is Chaperone SurA of Alkalilimnicola ehrlichii (strain ATCC BAA-1101 / DSM 17681 / MLHE-1).